A 497-amino-acid polypeptide reads, in one-letter code: Glycerol kinase (497 aa).

Thr12 provides a ligand contact to ADP. Residues Thr12, Thr13, and Ser14 each contribute to the ATP site. Thr12 is a sn-glycerol 3-phosphate binding site. Arg16 provides a ligand contact to ADP. Sn-glycerol 3-phosphate contacts are provided by Arg82, Glu83, Tyr134, and Asp243. Positions 82, 83, 134, 243, and 244 each coordinate glycerol. Thr265 and Gly308 together coordinate ADP. The ATP site is built by Thr265, Gly308, Gln312, and Gly409. ADP is bound by residues Gly409 and Asn413.

The protein belongs to the FGGY kinase family.

The enzyme catalyses glycerol + ATP = sn-glycerol 3-phosphate + ADP + H(+). It participates in polyol metabolism; glycerol degradation via glycerol kinase pathway; sn-glycerol 3-phosphate from glycerol: step 1/1. With respect to regulation, inhibited by fructose 1,6-bisphosphate (FBP). Functionally, key enzyme in the regulation of glycerol uptake and metabolism. Catalyzes the phosphorylation of glycerol to yield sn-glycerol 3-phosphate. This chain is Glycerol kinase, found in Nitratidesulfovibrio vulgaris (strain ATCC 29579 / DSM 644 / CCUG 34227 / NCIMB 8303 / VKM B-1760 / Hildenborough) (Desulfovibrio vulgaris).